The primary structure comprises 160 residues: Small ribosomal subunit protein uS7 (160 aa).

The protein belongs to the universal ribosomal protein uS7 family. Part of the 30S ribosomal subunit. Contacts proteins S9 and S11.

Its function is as follows. One of the primary rRNA binding proteins, it binds directly to 16S rRNA where it nucleates assembly of the head domain of the 30S subunit. Is located at the subunit interface close to the decoding center, probably blocks exit of the E-site tRNA. This is Small ribosomal subunit protein uS7 from Rickettsia rickettsii (strain Iowa).